The sequence spans 325 residues: Polyprenyl transferase mpaA (325 aa).

3 helical membrane passes run 27–47 (MPYY…ALKL), 56–76 (VEYI…LCGA), and 108–128 (VEAL…LDLI). An N-linked (GlcNAc...) asparagine glycan is attached at Asn131. 6 helical membrane passes run 134–151 (IWGL…YPYL), 159–179 (VFIY…ITGW), 192–212 (IFTH…YFNT), 240–260 (LFLA…VLKI), 262–282 (SPWL…MQIV), and 295–315 (IHWD…VEVG).

It belongs to the UbiA prenyltransferase family. The cofactor is Mg(2+).

It localises to the golgi apparatus membrane. The catalysed reaction is 5,7-dihydroxy-4-methylphthalide + (2E,6E)-farnesyl diphosphate = 4-farnesyl-3,5-dihydroxy-6-methylphthalide + diphosphate. The protein operates within secondary metabolite biosynthesis; terpenoid biosynthesis. Its function is as follows. Polyprenyl transferase; part of the gene cluster that mediates the biosynthesis of mycophenolic acid (MPA), the first isolated antibiotic natural product in the world obtained from a culture of Penicillium brevicompactum in 1893. MpaA is a Golgi apparatus-associated enzyme that catalyzes the prenylation of 5,7-dihydroxy-4,6-dimethylphthalide (DHMP) to yield farnesyl-DHMP (FDHMP). The first step of the pathway is the synthesis of 5-methylorsellinic acid (5MOA) by the cytosolic polyketide synthase mpaC. 5MOA is then converted to the phthalide compound 5,7-dihydroxy-4,6-dimethylphthalide (DHMP) by the endoplasmic reticulum-bound cytochrome P450 monooxygenase mpaDE. MpaDE first catalyzes hydroxylation of 5-MOA to 4,6-dihydroxy-2-(hydroxymethyl)-3-methylbenzoic acid (DHMB). MpaDE then acts as a lactone synthase that catalyzes the ring closure to convert DHMB into DHMP. The next step is the prenylation of DHMP by the Golgi apparatus-associated prenyltransferase mpaA to yield farnesyl-DHMP (FDHMP). The ER-bound oxygenase mpaB then mediates the oxidative cleavage the C19-C20 double bond in FDHMP to yield FDHMP-3C via a mycophenolic aldehyde intermediate. The O-methyltransferase mpaG catalyzes the methylation of FDHMP-3C to yield MFDHMP-3C. After the cytosolic methylation of FDHMP-3C, MFDHMP-3C enters into peroxisomes probably via free diffusion due to its low molecular weight. Upon a peroxisomal CoA ligation reaction, catalyzed by a beta-oxidation component enzyme acyl-CoA ligase ACL891, MFDHMP-3C-CoA would then be restricted to peroxisomes for the following beta-oxidation pathway steps. The peroxisomal beta-oxidation machinery than converts MFDHMP-3C-CoA into MPA_CoA, via a beta-oxidation chain-shortening process. Finally mpaH acts as a peroxisomal acyl-CoA hydrolase with high substrate specificity toward MPA-CoA to release the final product MPA. The chain is Polyprenyl transferase mpaA from Penicillium roqueforti (strain FM164).